We begin with the raw amino-acid sequence, 684 residues long: MNPADQFTPIEDLTFTQAQAEIRDLSDELTKWGREYYEEDNPSVEDYVYDAHYARLVALEKAYPSLAMPDSPTQHVAAGNQTKNDSRGLQKVVHPVPMLSLGDVFSIQELLDWDLVTTKNAGSQQKYNLELKIDGLAISLRYENGRLIQASTRGDGSIGENVTDNVKTITEIPKVLNEPLTIEVRGEIYMRKEAFADLNQQRDEEGKTIFANPRNAAAGSLRQLDPKITAKRHLSSFIYYTAQNDVLGVNTQSDVLERFRQLGFPVNSSNKVIDRMTEVKDYIDEYTIKRDNLPYGIDGVVVKVNDLDVENELGNTVKIPRWSIAYKFPPEEALTVVRDITWTVGRTGVVTPTAIMDPVFLAGTKVKRASLHNPDYLQEKDVRIGDTVTLHKAGDIIPEVGQVILKKRPADAQAYPIPVYCPSCKSKLVHVQGEVALRCINPECPAQIKEGLIHFASRNAMNIDGLGPRVVEQLLSKNLIRKISDLYALTESQLTTLDKFADLSSKNLIQAIDRSRQNSVERLITALGIRGVGAKAAKVLAAHFKNLRNLQNAGAEEIAEIDGVGQVMADAIRQYFNSESVASLINELENFQVNFDYLTTSTVDEKNYFFNKRIVLTGKLIHWTRPQMQAWLEEHGANVSSSVSSKTDLLIAGSDVGSKLERANKLGIKVINEQDFINLSNAKK.

Residues 46 to 50 (DYVYD), 100 to 101 (SL), and Glu-130 contribute to the NAD(+) site. The active-site N6-AMP-lysine intermediate is the Lys-132. 4 residues coordinate NAD(+): Arg-153, Glu-187, Lys-303, and Lys-327. Residues Cys-421, Cys-424, Cys-439, and Cys-444 each coordinate Zn(2+). The BRCT domain maps to 604 to 684 (DEKNYFFNKR…DFINLSNAKK (81 aa)).

The protein belongs to the NAD-dependent DNA ligase family. LigA subfamily. Mg(2+) serves as cofactor. Mn(2+) is required as a cofactor.

The catalysed reaction is NAD(+) + (deoxyribonucleotide)n-3'-hydroxyl + 5'-phospho-(deoxyribonucleotide)m = (deoxyribonucleotide)n+m + AMP + beta-nicotinamide D-nucleotide.. In terms of biological role, DNA ligase that catalyzes the formation of phosphodiester linkages between 5'-phosphoryl and 3'-hydroxyl groups in double-stranded DNA using NAD as a coenzyme and as the energy source for the reaction. It is essential for DNA replication and repair of damaged DNA. This is DNA ligase from Oenococcus oeni (strain ATCC BAA-331 / PSU-1).